Consider the following 113-residue polypeptide: Cytochrome c2 (113 aa).

Positions 15, 18, 19, and 92 each coordinate heme c.

It belongs to the cytochrome c family. In terms of processing, binds 1 heme c group covalently per subunit.

Cytochrome c2 is found mainly in purple, non-sulfur, photosynthetic bacteria where it functions as the electron donor to the oxidized bacteriochlorophyll in the photophosphorylation pathway. However, it may also have a role in the respiratory chain and is found in some non-photosynthetic bacteria. The protein is Cytochrome c2 of Pararhodospirillum photometricum (Rhodospirillum photometricum).